Reading from the N-terminus, the 367-residue chain is Choline-phosphate cytidylyltransferase A (367 aa).

N-acetylmethionine is present on methionine 1. The disordered stretch occupies residues 1 to 33 (MDAQCSAKVNARKRRKEAPGPNGATEEDGVPSK). Lysine 8 carries the N6-acetyllysine modification. CTP contacts are provided by isoleucine 84, phenylalanine 85, histidine 92, and lysine 122. Residues lysine 122 and tryptophan 151 each coordinate phosphocholine. Positions 168, 169, 173, 195, 196, 197, and 200 each coordinate CTP. 2 amphipathic regions span residues 228-287 (KELN…EFIG) and 298-315 (ALKH…QAIS). Phosphoserine is present on serine 233. The segment at 272–293 (IDLIQKWEEKSREFIGSFLEMF) is autoinhibitory (AI). Residues 313-367 (AISPKQSPSSSPTRERSPSPSFRWPFSGKTSPPCSPANLSRHKAAAYDISEDEED) are disordered. A phosphoserine mark is found at serine 315, serine 319, serine 321, serine 322, and serine 323. The stretch at 319 to 324 (SPSSSP) is repeat 1. Residues 319–339 (SPSSSPTRERSPSPSFRWPFS) show a composition bias toward low complexity. The residue at position 325 (threonine 325) is a Phosphothreonine. Serine 329, serine 331, and serine 333 each carry phosphoserine. The 2; approximate repeat unit spans residues 329-333 (SPSPS). The residue at position 342 (threonine 342) is a Phosphothreonine. 4 positions are modified to phosphoserine: serine 343, serine 347, serine 352, and serine 362. The stretch at 343-348 (SPPCSP) is repeat 3.

This sequence belongs to the cytidylyltransferase family. As to quaternary structure, homodimer. In terms of processing, the serine residues of the C-terminus are phosphorylated. The inactive soluble form is stabilized by phosphorylation, the active membrane bound form is promoted by anionic lipids or diacylglycerol, and is stabilized by dephosphorylation. Monoubiquitinated by the SCF(FBXL2) complex, leading to proteasomal degradation. In terms of tissue distribution, brain, placenta, liver, fetal and adult lung.

The protein localises to the cytoplasm. It is found in the cytosol. The protein resides in the membrane. It localises to the endoplasmic reticulum membrane. Its subcellular location is the nucleus. The catalysed reaction is phosphocholine + CTP + H(+) = CDP-choline + diphosphate. It functions in the pathway phospholipid metabolism; phosphatidylcholine biosynthesis; phosphatidylcholine from phosphocholine: step 1/2. With respect to regulation, interconverts between an inactive cytosolic form and an active membrane-bound form. Activation involves disruption of an inhibitory interaction between helices at the base of the active site and the autoinhibitory (AI) region. Activated by anionic lipid vesicles and by oleic acid or diacylglycerol-containing phosphatidylcholine vesicles. Its function is as follows. Catalyzes the key rate-limiting step in the CDP-choline pathway for phosphatidylcholine biosynthesis. The polypeptide is Choline-phosphate cytidylyltransferase A (PCYT1A) (Homo sapiens (Human)).